The primary structure comprises 209 residues: Holliday junction branch migration complex subunit RuvA (209 aa).

A domain I region spans residues 1–64 (MIGRIRGMLI…EDAQSLYGFA (64 aa)). Residues 65–143 (SRLDRNLFRL…QLEGQFVPSQ (79 aa)) form a domain II region. Residues 144–157 (PDVPTGAGAATASQ) form a flexible linker region. Residues 158–209 (AGPDPREEAEAALIALGYKPQEAAKAISKVAGPDMNSETLIRLALKNMIPAG) form a domain III region.

It belongs to the RuvA family. As to quaternary structure, homotetramer. Forms an RuvA(8)-RuvB(12)-Holliday junction (HJ) complex. HJ DNA is sandwiched between 2 RuvA tetramers; dsDNA enters through RuvA and exits via RuvB. An RuvB hexamer assembles on each DNA strand where it exits the tetramer. Each RuvB hexamer is contacted by two RuvA subunits (via domain III) on 2 adjacent RuvB subunits; this complex drives branch migration. In the full resolvosome a probable DNA-RuvA(4)-RuvB(12)-RuvC(2) complex forms which resolves the HJ.

It is found in the cytoplasm. The RuvA-RuvB-RuvC complex processes Holliday junction (HJ) DNA during genetic recombination and DNA repair, while the RuvA-RuvB complex plays an important role in the rescue of blocked DNA replication forks via replication fork reversal (RFR). RuvA specifically binds to HJ cruciform DNA, conferring on it an open structure. The RuvB hexamer acts as an ATP-dependent pump, pulling dsDNA into and through the RuvAB complex. HJ branch migration allows RuvC to scan DNA until it finds its consensus sequence, where it cleaves and resolves the cruciform DNA. In Marinobacter nauticus (strain ATCC 700491 / DSM 11845 / VT8) (Marinobacter aquaeolei), this protein is Holliday junction branch migration complex subunit RuvA.